The chain runs to 319 residues: MDYGFATRAIHAGQDPESVTGAVIVPIYQTSTYAQRGVGDHTGYEYSRTDNPTRTALQTCLAALEEAKHALVFASGLGASTTLMLMLKAGDHVICGDDVYGGTYRLFQRVMTEHGLSFDFIDMADPEAVRAAIKPNTRLIWLETPTNPLLKLAPIAAITRVAREHGIWTIVDNTFASPYNQRPITLGADMVLHSTTKYIGGHSDVVGGAIMTSNDELYEKLKFLQNAAGAVPGPFDCWLVLRGVKTLSIRMRDDERNALAIAQFLTEHPGVEKVIYPGLPSHPQHNLAREQMRGFGGMISILLKGGAEAANAMVSKTKL.

An N6-(pyridoxal phosphate)lysine modification is found at Lys197.

It belongs to the trans-sulfuration enzymes family. As to quaternary structure, homotetramer. The cofactor is pyridoxal 5'-phosphate.

The protein resides in the cytoplasm. The enzyme catalyses O-succinyl-L-homoserine + L-cysteine = L,L-cystathionine + succinate + H(+). Its function is as follows. Catalyzes the formation of L-cystathionine from O-succinyl-L-homoserine (OSHS) and L-cysteine, via a gamma-replacement reaction. In the absence of thiol, catalyzes gamma-elimination to form 2-oxobutanoate, succinate and ammonia. This is Probable cystathionine gamma-synthase (metB) from Herpetosiphon aurantiacus (Herpetosiphon giganteus).